The primary structure comprises 201 residues: Holliday junction branch migration complex subunit RuvA (201 aa).

Residues 1–64 (MIGFIRGLLV…EDAHSLFGFG (64 aa)) form a domain I region. The tract at residues 65-143 (TEAERGLFRS…IGVPSLAPAS (79 aa)) is domain II. A flexible linker region spans residues 144-153 (FAGGAAPLPA). The domain III stretch occupies residues 153 to 201 (AADPADEAVSALIALGFKPQEANTLVARQAAEGRSAEDLIRAALQSAVR).

Belongs to the RuvA family. As to quaternary structure, homotetramer. Forms an RuvA(8)-RuvB(12)-Holliday junction (HJ) complex. HJ DNA is sandwiched between 2 RuvA tetramers; dsDNA enters through RuvA and exits via RuvB. An RuvB hexamer assembles on each DNA strand where it exits the tetramer. Each RuvB hexamer is contacted by two RuvA subunits (via domain III) on 2 adjacent RuvB subunits; this complex drives branch migration. In the full resolvosome a probable DNA-RuvA(4)-RuvB(12)-RuvC(2) complex forms which resolves the HJ.

The protein resides in the cytoplasm. The RuvA-RuvB-RuvC complex processes Holliday junction (HJ) DNA during genetic recombination and DNA repair, while the RuvA-RuvB complex plays an important role in the rescue of blocked DNA replication forks via replication fork reversal (RFR). RuvA specifically binds to HJ cruciform DNA, conferring on it an open structure. The RuvB hexamer acts as an ATP-dependent pump, pulling dsDNA into and through the RuvAB complex. HJ branch migration allows RuvC to scan DNA until it finds its consensus sequence, where it cleaves and resolves the cruciform DNA. In Methylococcus capsulatus (strain ATCC 33009 / NCIMB 11132 / Bath), this protein is Holliday junction branch migration complex subunit RuvA.